Consider the following 117-residue polypeptide: Putative phosphotransferase enzyme IIB component MPN_268 (117 aa).

A helical transmembrane segment spans residues 1 to 21; it reads MKVLLWIGYVLSFGLLYLYLV. One can recognise a PTS EIIB type-1 domain in the interval 42–117; sequence PFAVRDFIAA…QLKQQIENER (76 aa).

The protein localises to the membrane. In terms of biological role, the phosphoenolpyruvate-dependent sugar phosphotransferase system (PTS), a major carbohydrate active -transport system, catalyzes the phosphorylation of incoming sugar substrates concomitant with their translocation across the cell membrane. The chain is Putative phosphotransferase enzyme IIB component MPN_268 from Mycoplasma pneumoniae (strain ATCC 29342 / M129 / Subtype 1) (Mycoplasmoides pneumoniae).